We begin with the raw amino-acid sequence, 275 residues long: ATP synthase subunit delta (275 aa).

The protein belongs to the ATPase delta chain family. In terms of assembly, F-type ATPases have 2 components, F(1) - the catalytic core - and F(0) - the membrane proton channel. F(1) has five subunits: alpha(3), beta(3), gamma(1), delta(1), epsilon(1). F(0) has three main subunits: a(1), b(2) and c(10-14). The alpha and beta chains form an alternating ring which encloses part of the gamma chain. F(1) is attached to F(0) by a central stalk formed by the gamma and epsilon chains, while a peripheral stalk is formed by the delta and b chains.

The protein localises to the cell membrane. In terms of biological role, f(1)F(0) ATP synthase produces ATP from ADP in the presence of a proton or sodium gradient. F-type ATPases consist of two structural domains, F(1) containing the extramembraneous catalytic core and F(0) containing the membrane proton channel, linked together by a central stalk and a peripheral stalk. During catalysis, ATP synthesis in the catalytic domain of F(1) is coupled via a rotary mechanism of the central stalk subunits to proton translocation. This protein is part of the stalk that links CF(0) to CF(1). It either transmits conformational changes from CF(0) to CF(1) or is implicated in proton conduction. The chain is ATP synthase subunit delta from Bifidobacterium adolescentis (strain ATCC 15703 / DSM 20083 / NCTC 11814 / E194a).